The primary structure comprises 193 residues: Leucyl/phenylalanyl-tRNA--protein transferase (193 aa).

The protein belongs to the L/F-transferase family.

The protein localises to the cytoplasm. It carries out the reaction N-terminal L-lysyl-[protein] + L-leucyl-tRNA(Leu) = N-terminal L-leucyl-L-lysyl-[protein] + tRNA(Leu) + H(+). The catalysed reaction is N-terminal L-arginyl-[protein] + L-leucyl-tRNA(Leu) = N-terminal L-leucyl-L-arginyl-[protein] + tRNA(Leu) + H(+). It catalyses the reaction L-phenylalanyl-tRNA(Phe) + an N-terminal L-alpha-aminoacyl-[protein] = an N-terminal L-phenylalanyl-L-alpha-aminoacyl-[protein] + tRNA(Phe). Functions in the N-end rule pathway of protein degradation where it conjugates Leu, Phe and, less efficiently, Met from aminoacyl-tRNAs to the N-termini of proteins containing an N-terminal arginine or lysine. The sequence is that of Leucyl/phenylalanyl-tRNA--protein transferase from Akkermansia muciniphila (strain ATCC BAA-835 / DSM 22959 / JCM 33894 / BCRC 81048 / CCUG 64013 / CIP 107961 / Muc).